We begin with the raw amino-acid sequence, 361 residues long: Outer mitochondrial transmembrane helix translocase (361 aa).

The Mitochondrial intermembrane segment spans residues 1-15; sequence MVHAEAFSRPLSRNE. The helical transmembrane segment at 16-32 threads the bilayer; it reads VVGLIFRLTIFGAVTYF. Topologically, residues 33–361 are cytoplasmic; it reads TIKWMVDAID…QSVLTHVCLD (329 aa). Residue 133–140 participates in ATP binding; it reads GPPGCGKT. S322 is modified (phosphoserine).

The protein belongs to the AAA ATPase family. MSP1 subfamily. In terms of assembly, interacts with GRIA2 and GRIP1 in an ATP-dependent manner. ATAD1-catalyzed ATP hydrolysis disrupts not only its binding to GRIA2 and GRIP1, but also interaction between GRIP1 and GRIA2, leading to AMPAR complex disassembly.

The protein resides in the mitochondrion outer membrane. It localises to the peroxisome membrane. The protein localises to the postsynaptic cell membrane. It carries out the reaction [protein]-with a C-terminal TM segment(out) + ATP + H2O = [protein]-with a C-terminal TM segment(in) + ADP + phosphate + H(+). In terms of biological role, outer mitochondrial translocase required to remove mislocalized tail-anchored transmembrane proteins on mitochondria. Specifically recognizes and binds tail-anchored transmembrane proteins: acts as a dislocase that mediates the ATP-dependent extraction of mistargeted tail-anchored transmembrane proteins from the mitochondrion outer membrane. Also plays a critical role in regulating the surface expression of AMPA receptors (AMPAR), thereby regulating synaptic plasticity and learning and memory. Required for NMDA-stimulated AMPAR internalization and inhibition of GRIA1 and GRIA2 recycling back to the plasma membrane; these activities are ATPase-dependent. This Rattus norvegicus (Rat) protein is Outer mitochondrial transmembrane helix translocase.